Reading from the N-terminus, the 214-residue chain is UPF0502 protein Acid345_3645 (214 aa).

It belongs to the UPF0502 family.

The sequence is that of UPF0502 protein Acid345_3645 from Koribacter versatilis (strain Ellin345).